The primary structure comprises 387 residues: 1,3-propanediol dehydrogenase (387 aa).

The protein belongs to the iron-containing alcohol dehydrogenase family. In terms of assembly, homooctamer. It depends on Fe cation as a cofactor.

It catalyses the reaction propane-1,3-diol + NAD(+) = 3-hydroxypropanal + NADH + H(+). Its activity is regulated as follows. Inhibited by the metal chelator 1,10-phenanthroline. Catalyzes the reduction of 3-hydroxypropanal. Is considerably less active with glyceraldehyde, propionaldehyde, acetaldehyde, and butyraldehyde. Also catalyzes the oxidation of various primary, secondary, and tertiary alcohols. Is most active with substrates containing two primary alcohol groups separated by one or two carbon atoms. 1,3-propanediol is the preferred substrate. The sequence is that of 1,3-propanediol dehydrogenase from Citrobacter freundii.